A 206-amino-acid polypeptide reads, in one-letter code: Small ribosomal subunit protein uS7 (206 aa).

Belongs to the universal ribosomal protein uS7 family. As to quaternary structure, component of the small ribosomal subunit.

The protein resides in the cytoplasm. Functionally, component of the small ribosomal subunit. The ribosome is a large ribonucleoprotein complex responsible for the synthesis of proteins in the cell. The polypeptide is Small ribosomal subunit protein uS7 (Entamoeba histolytica (strain ATCC 30459 / HM-1:IMSS / ABRM)).